The following is an 86-amino-acid chain: DNA-directed RNA polymerase subunit omega (86 aa).

The protein belongs to the RNA polymerase subunit omega family. The RNAP catalytic core consists of 2 alpha, 1 beta, 1 beta' and 1 omega subunit. When a sigma factor is associated with the core the holoenzyme is formed, which can initiate transcription.

It carries out the reaction RNA(n) + a ribonucleoside 5'-triphosphate = RNA(n+1) + diphosphate. Its function is as follows. Promotes RNA polymerase assembly. Latches the N- and C-terminal regions of the beta' subunit thereby facilitating its interaction with the beta and alpha subunits. This Agathobacter rectalis (strain ATCC 33656 / DSM 3377 / JCM 17463 / KCTC 5835 / VPI 0990) (Eubacterium rectale) protein is DNA-directed RNA polymerase subunit omega.